The sequence spans 151 residues: Arginine repressor (151 aa).

It belongs to the ArgR family.

The protein resides in the cytoplasm. Its pathway is amino-acid biosynthesis; L-arginine biosynthesis [regulation]. Its function is as follows. Regulates arginine biosynthesis genes. The sequence is that of Arginine repressor from Moorella thermoacetica (strain ATCC 39073 / JCM 9320).